Here is a 94-residue protein sequence, read N- to C-terminus: Large ribosomal subunit protein uL23 (94 aa).

This sequence belongs to the universal ribosomal protein uL23 family. As to quaternary structure, part of the 50S ribosomal subunit. Contacts protein L29, and trigger factor when it is bound to the ribosome.

Functionally, one of the early assembly proteins it binds 23S rRNA. One of the proteins that surrounds the polypeptide exit tunnel on the outside of the ribosome. Forms the main docking site for trigger factor binding to the ribosome. The protein is Large ribosomal subunit protein uL23 of Ligilactobacillus salivarius (strain UCC118) (Lactobacillus salivarius).